The primary structure comprises 148 residues: SsrA-binding protein (148 aa).

It belongs to the SmpB family.

It localises to the cytoplasm. In terms of biological role, required for rescue of stalled ribosomes mediated by trans-translation. Binds to transfer-messenger RNA (tmRNA), required for stable association of tmRNA with ribosomes. tmRNA and SmpB together mimic tRNA shape, replacing the anticodon stem-loop with SmpB. tmRNA is encoded by the ssrA gene; the 2 termini fold to resemble tRNA(Ala) and it encodes a 'tag peptide', a short internal open reading frame. During trans-translation Ala-aminoacylated tmRNA acts like a tRNA, entering the A-site of stalled ribosomes, displacing the stalled mRNA. The ribosome then switches to translate the ORF on the tmRNA; the nascent peptide is terminated with the 'tag peptide' encoded by the tmRNA and targeted for degradation. The ribosome is freed to recommence translation, which seems to be the essential function of trans-translation. This is SsrA-binding protein from Pseudothermotoga lettingae (strain ATCC BAA-301 / DSM 14385 / NBRC 107922 / TMO) (Thermotoga lettingae).